A 30-amino-acid polypeptide reads, in one-letter code: L-amino-acid oxidase (30 aa).

The protein belongs to the flavin monoamine oxidase family. FIG1 subfamily. As to quaternary structure, monomer. This is in contrast with most of its orthologs, that are non-covalently linked homodimers. Requires FAD as cofactor. In terms of processing, N-glycosylated. Expressed by the venom gland.

Its subcellular location is the secreted. It carries out the reaction an L-alpha-amino acid + O2 + H2O = a 2-oxocarboxylate + H2O2 + NH4(+). The catalysed reaction is L-leucine + O2 + H2O = 4-methyl-2-oxopentanoate + H2O2 + NH4(+). The enzyme catalyses L-phenylalanine + O2 + H2O = 3-phenylpyruvate + H2O2 + NH4(+). It catalyses the reaction L-tryptophan + O2 + H2O = indole-3-pyruvate + H2O2 + NH4(+). It carries out the reaction L-methionine + O2 + H2O = 4-methylsulfanyl-2-oxobutanoate + H2O2 + NH4(+). The catalysed reaction is L-2-aminohexanoate + O2 + H2O = 2-oxohexanoate + H2O2 + NH4(+). The enzyme catalyses L-tyrosine + O2 + H2O = 3-(4-hydroxyphenyl)pyruvate + H2O2 + NH4(+). Its function is as follows. Catalyzes an oxidative deamination of predominantly hydrophobic and aromatic L-amino acids, thus producing hydrogen peroxide that may contribute to the diverse toxic effects of this enzyme. Is highly active against L-Met, L-Leu, L-norleucine (L-2-aminohexanoate), L-Trp, L-Phe, moderately active against L-Tyr, and no active on L-Gly, L-Ala, L-Val, L-Pro, L-His, L-Lys, L-Arg, L-Asp, L-Asn, L-Gln, L-Glu, L-Ser, and L-Thr. Exhibits diverse biological activities, such as hemorrhage, hemolysis, edema, antibacterial and antiparasitic activities. In addition, this protein induces apoptosis. It also interacts with endothelial cells, and inhibits collagen- and ADP-induced platelet aggregation. L-LAAO family effects on platelets are controversial, since it either induces aggregation or inhibits agonist-induced aggregation. These different effects are probably due to different experimental conditions. This chain is L-amino-acid oxidase, found in Bothrops leucurus (Whitetail lancehead).